A 255-amino-acid chain; its full sequence is MVLVVDVGNTHIVLGVFEGKKLLANWRLGTNKERTSDELGMLILGLFNHEKLSIDKVKSVVVASVVPPIMYTLEHAIKKYINIQPMIIGPGTKTGINIRYQNPKEVGADRIVNAVAGFELYGGPLIIVDMGTATTFCAISEKGEYLGGVICPGIKISAEALYQKAAKLPRIDLVKPESVIGKNTISSMQSGVFFGYVGQVDYIVNRIKNEMHEENVRVIATGGISRMITEESITINEFNPTLTLEGLRLIYERNV.

6–13 is an ATP binding site; the sequence is DVGNTHIV. Residues Tyr-100 and 107-110 contribute to the substrate site; that span reads GADR. The active-site Proton acceptor is Asp-109. Asp-129 is a K(+) binding site. Thr-132 is a binding site for ATP. Thr-184 provides a ligand contact to substrate.

Belongs to the type III pantothenate kinase family. Homodimer. Requires NH4(+) as cofactor. K(+) is required as a cofactor.

The protein localises to the cytoplasm. It catalyses the reaction (R)-pantothenate + ATP = (R)-4'-phosphopantothenate + ADP + H(+). It participates in cofactor biosynthesis; coenzyme A biosynthesis; CoA from (R)-pantothenate: step 1/5. Its function is as follows. Catalyzes the phosphorylation of pantothenate (Pan), the first step in CoA biosynthesis. In Ruminiclostridium cellulolyticum (strain ATCC 35319 / DSM 5812 / JCM 6584 / H10) (Clostridium cellulolyticum), this protein is Type III pantothenate kinase.